Consider the following 769-residue polypeptide: Ligand-dependent nuclear receptor-interacting factor 1 (769 aa).

Glycyl lysine isopeptide (Lys-Gly) (interchain with G-Cter in SUMO2) cross-links involve residues lysine 259 and lysine 279. Polar residues predominate over residues glutamine 378–proline 387. The disordered stretch occupies residues glutamine 378–serine 400. 3 positions are modified to phosphoserine: serine 402, serine 430, and serine 436. A Glycyl lysine isopeptide (Lys-Gly) (interchain with G-Cter in SUMO2) cross-link involves residue lysine 446. Serine 502 carries the phosphoserine modification. Residues aspartate 528–leucine 562 are disordered. Positions leucine 580–leucine 584 match the PxVxL motif motif. Serine 599 carries the phosphoserine modification. Residue lysine 605 forms a Glycyl lysine isopeptide (Lys-Gly) (interchain with G-Cter in SUMO2) linkage. 2 short sequence motifs (nuclear localization signal) span residues lysine 628–lysine 631 and lysine 642–lysine 645. Lysine 702 participates in a covalent cross-link: Glycyl lysine isopeptide (Lys-Gly) (interchain with G-Cter in SUMO2). Position 732 is a phosphothreonine (threonine 732). A coiled-coil region spans residues isoleucine 740–lysine 769.

Belongs to the LRIF1 family. As to quaternary structure, interacts with RARA. Interacts with SMCHD1; leading to recruitment to inactivated chromosome X in females. Interacts (via PxVxL motif) with HP1 (CBX1/HP1-beta, CBX3/HP1-gamma and CBX5/HP1-alpha). Widely expressed, with the highest expression levels in heart, liver and placenta.

Its subcellular location is the chromosome. The protein resides in the nucleus matrix. Functionally, together with SMCHD1, involved in chromosome X inactivation in females by promoting the compaction of heterochromatin. Also able to repress the ligand-induced transcriptional activity of retinoic acid receptor alpha (RARA), possibly through direct recruitment of histone deacetylases. Also required for silencing of the DUX4 locus in somatic cells. The polypeptide is Ligand-dependent nuclear receptor-interacting factor 1 (Homo sapiens (Human)).